Here is a 96-residue protein sequence, read N- to C-terminus: Protein RnfH (96 aa).

This sequence belongs to the UPF0125 (RnfH) family.

The sequence is that of Protein RnfH from Klebsiella pneumoniae (strain 342).